Consider the following 459-residue polypeptide: Ribulose bisphosphate carboxylase large chain (459 aa).

An N6,N6,N6-trimethyllysine modification is found at Lys-4. Substrate-binding residues include Asn-113 and Thr-163. The active-site Proton acceptor is the Lys-165. Lys-167 contributes to the substrate binding site. 3 residues coordinate Mg(2+): Lys-191, Asp-193, and Glu-194. Lys-191 is modified (N6-carboxylysine). Residue His-284 is the Proton acceptor of the active site. Substrate-binding residues include Arg-285, His-317, and Ser-369.

It belongs to the RuBisCO large chain family. Type I subfamily. In terms of assembly, heterohexadecamer of 8 large chains and 8 small chains; disulfide-linked. The disulfide link is formed within the large subunit homodimers. Requires Mg(2+) as cofactor. The disulfide bond which can form in the large chain dimeric partners within the hexadecamer appears to be associated with oxidative stress and protein turnover.

The protein localises to the plastid. It is found in the chloroplast. The enzyme catalyses 2 (2R)-3-phosphoglycerate + 2 H(+) = D-ribulose 1,5-bisphosphate + CO2 + H2O. It catalyses the reaction D-ribulose 1,5-bisphosphate + O2 = 2-phosphoglycolate + (2R)-3-phosphoglycerate + 2 H(+). In terms of biological role, ruBisCO catalyzes two reactions: the carboxylation of D-ribulose 1,5-bisphosphate, the primary event in carbon dioxide fixation, as well as the oxidative fragmentation of the pentose substrate in the photorespiration process. Both reactions occur simultaneously and in competition at the same active site. This Morus alba (White mulberry) protein is Ribulose bisphosphate carboxylase large chain.